Reading from the N-terminus, the 641-residue chain is Single-strand DNA endonuclease 1 (641 aa).

The tract at residues 1-90 (MGVKNLWDIL…SLKLATYRRR (90 aa)) is N-domain. The XPG-N domain stretch occupies residues 2–97 (GVKNLWDILE…RRRLGSISHA (96 aa)). Mg(2+) is bound by residues Asp30, Asp76, Glu144, Glu146, Asp165, Asp167, and Asp217. The interval 132–217 (MALGIPCLDG…ISLAVLLGSD (86 aa)) is XPG-I domain. I-domain stretches follow at residues 132 to 220 (MALG…DYSN) and 132 to 221 (MALG…YSNG). Residues 217–350 (DYSNGVNGFG…ILPKIAEREL (134 aa)) form a 5'-3' exonuclease domain region. Disordered stretches follow at residues 428-448 (KGEE…QAAV) and 572-615 (VGSH…RVHH). Residues 580 to 590 (DGGGGGGGGVA) show a composition bias toward gly residues.

It belongs to the XPG/RAD2 endonuclease family. GEN subfamily. Mg(2+) serves as cofactor. In terms of tissue distribution, highly expressed in shoot apical meristem (SAM) and young leaves. Expressed in roots, flag leaf and panicles.

It is found in the nucleus. In terms of biological role, single-stranded DNA endonuclease activity in vitro. May not be active as double-stranded DNA endonuclease. Endonuclease which cleaves flap structures at the junction between single-stranded DNA and double-stranded DNA with a specific cleavage site in the 5' overhang strand exactly one nucleotide 3' of the branch point. Structure- and sequence-specific nuclease that resolves holliday junctions (HJs) by symmetrically oriented incisions in two opposing strands near the junction point, thus leading to ligatable products; HJs are physical links between homologous DNA molecules that arise as central intermediary structures during homologous recombination and repair in meiotic and somatic cells. Probably involved in the resolution of toxic replication structures to ensure genome stability, and to maintain telomere integrity and replication. This is Single-strand DNA endonuclease 1 from Oryza sativa subsp. japonica (Rice).